The following is a 505-amino-acid chain: Oxidative stress-induced growth inhibitor 2 (505 aa).

The protein belongs to the OKL38 family. NADPH is required as a cofactor. In terms of tissue distribution, ubiquitous. Expressed at higher levels in testis and ovary.

It localises to the midbody. Its function is as follows. Monooxygenase catalytic activity. May be involved in meiosis or the maturation of germ cells. This chain is Oxidative stress-induced growth inhibitor 2, found in Homo sapiens (Human).